A 371-amino-acid polypeptide reads, in one-letter code: Chaperone protein DnaJ (371 aa).

In terms of domain architecture, J spans 5–69; it reads DYYEVLGLSK…QKRAQYDQFG (65 aa). The CR-type zinc-finger motif lies at 133 to 215; it reads GKELNVEIPV…CHGSGKVRKR (83 aa). Residues Cys-146, Cys-149, Cys-163, Cys-166, Cys-189, Cys-192, Cys-203, and Cys-206 each coordinate Zn(2+). 4 CXXCXGXG motif repeats span residues 146–153, 163–170, 189–196, and 203–210; these read CDTCKGSG, CKHCSGSG, CSHCSGTG, and CTTCHGSG.

Belongs to the DnaJ family. In terms of assembly, homodimer. Zn(2+) is required as a cofactor.

Its subcellular location is the cytoplasm. Functionally, participates actively in the response to hyperosmotic and heat shock by preventing the aggregation of stress-denatured proteins and by disaggregating proteins, also in an autonomous, DnaK-independent fashion. Unfolded proteins bind initially to DnaJ; upon interaction with the DnaJ-bound protein, DnaK hydrolyzes its bound ATP, resulting in the formation of a stable complex. GrpE releases ADP from DnaK; ATP binding to DnaK triggers the release of the substrate protein, thus completing the reaction cycle. Several rounds of ATP-dependent interactions between DnaJ, DnaK and GrpE are required for fully efficient folding. Also involved, together with DnaK and GrpE, in the DNA replication of plasmids through activation of initiation proteins. The sequence is that of Chaperone protein DnaJ from Bacillus cereus (strain 03BB102).